Consider the following 578-residue polypeptide: Zinc finger-containing ubiquitin peptidase 1 (578 aa).

The C2H2-type 1 zinc-finger motif lies at 2 to 24 (LSCNICGETVTSEPDMKAHLIVH). The C2H2-type 2; atypical zinc finger occupies 29 to 52 (IICPFCKLSGVNYDEMCFHIETAH). 2 C2H2-type zinc fingers span residues 154–177 (PECP…KTKH) and 193–215 (YDCP…VDLH). The segment at 226-248 (DRVQCSGDLQLAHQLQQEEDRKR) is MIU. Residues 249-274 (RSEESRQEIEEFQKLQRQYGLDNSGG) form a zUBD/ZHA region. Lys-262 carries the N6-acetyllysine modification. The active-site Nucleophile is the Cys-360. His-491 functions as the Proton acceptor in the catalytic mechanism. Asp-512 is an active-site residue.

This sequence belongs to the peptidase C78 family. ZUFSP subfamily. In terms of assembly, interacts with RPA1 and RPA2.

The protein localises to the cytoplasm. Its subcellular location is the nucleus. The catalysed reaction is Thiol-dependent hydrolysis of ester, thioester, amide, peptide and isopeptide bonds formed by the C-terminal Gly of ubiquitin (a 76-residue protein attached to proteins as an intracellular targeting signal).. Its function is as follows. Deubiquitinase with endodeubiquitinase activity that specifically interacts with and cleaves 'Lys-63'-linked long polyubiquitin chains. Shows only weak activity against 'Lys-11' and 'Lys-48'-linked chains. Plays an important role in genome stability pathways, functioning to prevent spontaneous DNA damage and also promote cellular survival in response to exogenous DNA damage. Modulates the ubiquitination status of replication protein A (RPA) complex proteins in response to replication stress. This Homo sapiens (Human) protein is Zinc finger-containing ubiquitin peptidase 1.